Consider the following 357-residue polypeptide: Alanine racemase (357 aa).

Lys-35 functions as the Proton acceptor; specific for D-alanine in the catalytic mechanism. Lys-35 carries the N6-(pyridoxal phosphate)lysine modification. Arg-128 contributes to the substrate binding site. The Proton acceptor; specific for L-alanine role is filled by Tyr-254. Met-302 is a binding site for substrate.

It belongs to the alanine racemase family. Requires pyridoxal 5'-phosphate as cofactor.

The enzyme catalyses L-alanine = D-alanine. It participates in amino-acid biosynthesis; D-alanine biosynthesis; D-alanine from L-alanine: step 1/1. Functionally, catalyzes the interconversion of L-alanine and D-alanine. May also act on other amino acids. This is Alanine racemase (alr) from Marinobacter nauticus (strain ATCC 700491 / DSM 11845 / VT8) (Marinobacter aquaeolei).